The primary structure comprises 414 residues: Enterobactin exporter EntS (414 aa).

Over 1-21 the chain is Cytoplasmic; the sequence is MNRQSWLLNLSLLKTHPAFRA. Residues 22 to 42 traverse the membrane as a helical segment; that stretch reads VFLARFISIVSLGLLGVAVPV. Over 43 to 55 the chain is Periplasmic; sequence QIQMMTHSTWQVG. A helical membrane pass occupies residues 56 to 76; the sequence is LSVTLTGGAMFIGLMVGGVLA. Residues 77 to 83 lie on the Cytoplasmic side of the membrane; it reads DRYERKK. A helical membrane pass occupies residues 84–104; the sequence is VILLARGTCGIGFIGLCVNSL. Topologically, residues 105–109 are periplasmic; it reads LPEPS. A helical membrane pass occupies residues 110–130; it reads LLAIYLLGLWDGFFASLGVTA. The Cytoplasmic portion of the chain corresponds to 131-156; sequence LLAATPALVGRENLMQAGAITMLTVR. A helical transmembrane segment spans residues 157 to 177; the sequence is LGSVISPMLGGILLASGGVAW. Position 178 (Asn178) is a topological domain, periplasmic. The helical transmembrane segment at 179-199 threads the bilayer; the sequence is YGLAAAGTFITLLPLLTLPRL. Topologically, residues 200 to 218 are cytoplasmic; the sequence is PVPPQPRENPFIALLAAFR. The helical transmembrane segment at 219–239 threads the bilayer; sequence FLLASPLIGGIALLGGLVTMA. The Periplasmic portion of the chain corresponds to 240–256; that stretch reads SAVRVLYPALAMSWQMS. The helical transmembrane segment at 257-277 threads the bilayer; sequence AAQIGLLYAAIPLGAAIGALT. Residues 278–287 are Cytoplasmic-facing; the sequence is SGQLAHSVRP. The helical transmembrane segment at 288 to 307 threads the bilayer; that stretch reads GLIMLVSTVGSFLAVGLFAI. Residues 308–313 lie on the Periplasmic side of the membrane; sequence MPVWTA. The helical transmembrane segment at 314–336 threads the bilayer; it reads GVICLALFGWLSAISSLLQYTLL. At 337 to 356 the chain is on the cytoplasmic side; it reads QTQTPENMLGRMNGLWTAQN. Residues 357-377 form a helical membrane-spanning segment; that stretch reads VTGDAIGAALLGGLGAMMTPV. A topological domain (periplasmic) is located at residue Ala378. A helical membrane pass occupies residues 379 to 399; that stretch reads SASVSGFGLVIIGLLLLLVLG. The Cytoplasmic segment spans residues 400–414; sequence ELRRFRQTPPVSDAG.

This sequence belongs to the major facilitator superfamily. EntS (TC 2.A.1.38) family.

The protein localises to the cell inner membrane. Its function is as follows. Component of an export pathway for enterobactin. The chain is Enterobactin exporter EntS from Salmonella choleraesuis (strain SC-B67).